The sequence spans 359 residues: Fructose-bisphosphate aldolase (359 aa).

Threonine 11 carries the post-translational modification Phosphothreonine. Residue lysine 27 forms a Glycyl lysine isopeptide (Lys-Gly) (interchain with G-Cter in ubiquitin) linkage. 2 positions are modified to phosphoserine: serine 56 and serine 63. Serine 63 contributes to the D-glyceraldehyde 3-phosphate binding site. A Glycyl lysine isopeptide (Lys-Gly) (interchain with G-Cter in ubiquitin) cross-link involves residue lysine 73. Phosphoserine is present on residues serine 76 and serine 83. Lysine 85 participates in a covalent cross-link: Glycyl lysine isopeptide (Lys-Gly) (interchain with G-Cter in ubiquitin). Serine 96 bears the Phosphoserine mark. The active-site Proton donor is aspartate 110. Histidine 111 and aspartate 145 together coordinate Zn(2+). A Phosphoserine modification is found at serine 147. The residue at position 150 (threonine 150) is a Phosphothreonine. Glutamate 175 provides a ligand contact to Zn(2+). At threonine 179 the chain carries Phosphothreonine. Residue histidine 227 participates in Zn(2+) binding. Residue glycine 228 participates in dihydroxyacetone phosphate binding. Histidine 265 is a Zn(2+) binding site. Residues 266–268 and 287–290 each bind dihydroxyacetone phosphate; these read GGS and NLDT. A Phosphoserine modification is found at serine 268. Residue threonine 290 is modified to Phosphothreonine. Lysine 308 participates in a covalent cross-link: Glycyl lysine isopeptide (Lys-Gly) (interchain with G-Cter in ubiquitin). Phosphotyrosine is present on tyrosine 310. The residue at position 313 (serine 313) is a Phosphoserine.

This sequence belongs to the class II fructose-bisphosphate aldolase family. Homodimer. Zn(2+) is required as a cofactor.

The catalysed reaction is beta-D-fructose 1,6-bisphosphate = D-glyceraldehyde 3-phosphate + dihydroxyacetone phosphate. It functions in the pathway carbohydrate degradation; glycolysis; D-glyceraldehyde 3-phosphate and glycerone phosphate from D-glucose: step 4/4. Catalyzes the aldol condensation of dihydroxyacetone phosphate (DHAP or glycerone-phosphate) with glyceraldehyde 3-phosphate (G3P) to form fructose 1,6-bisphosphate (FBP) in gluconeogenesis and the reverse reaction in glycolysis. The protein is Fructose-bisphosphate aldolase (FBA1) of Saccharomyces cerevisiae (strain ATCC 204508 / S288c) (Baker's yeast).